Reading from the N-terminus, the 419-residue chain is Serine hydroxymethyltransferase (419 aa).

(6S)-5,6,7,8-tetrahydrofolate is bound by residues leucine 121 and glycine 125 to leucine 127. At lysine 229 the chain carries N6-(pyridoxal phosphate)lysine.

The protein belongs to the SHMT family. In terms of assembly, homodimer. It depends on pyridoxal 5'-phosphate as a cofactor.

It localises to the cytoplasm. It carries out the reaction (6R)-5,10-methylene-5,6,7,8-tetrahydrofolate + glycine + H2O = (6S)-5,6,7,8-tetrahydrofolate + L-serine. Its pathway is one-carbon metabolism; tetrahydrofolate interconversion. It participates in amino-acid biosynthesis; glycine biosynthesis; glycine from L-serine: step 1/1. Its function is as follows. Catalyzes the reversible interconversion of serine and glycine with tetrahydrofolate (THF) serving as the one-carbon carrier. This reaction serves as the major source of one-carbon groups required for the biosynthesis of purines, thymidylate, methionine, and other important biomolecules. Also exhibits THF-independent aldolase activity toward beta-hydroxyamino acids, producing glycine and aldehydes, via a retro-aldol mechanism. This is Serine hydroxymethyltransferase from Streptomyces griseus subsp. griseus (strain JCM 4626 / CBS 651.72 / NBRC 13350 / KCC S-0626 / ISP 5235).